The following is a 449-amino-acid chain: Sensor histidine protein kinase/phosphatase WalK (449 aa).

The Extracellular segment spans residues 1-13 (MLDLLKQTIFTRD). Residues 14-34 (FIFILILLGFILVVTLLLLEN) traverse the membrane as a helical segment. Positions 35-87 (RRDNIQLKQINQKVKDLIAGDYSKVLDMQGGSEITNITNNLNDLSEVIRLTQE) constitute an HAMP domain. Residues 35 to 449 (RRDNIQLKQI…EEVWEDEVED (415 aa)) are Cytoplasmic-facing. The PAS domain occupies 92–158 (ESKRLNSILF…YELRDLITQS (67 aa)). A PAC domain is found at 157–211 (QSPELLLDSQDINGEYLNLRVRFALIRRESGFISGLVAVLHDTTEQEKEERERRL). The region spanning 215–435 (NVSHELRTPL…TFTIVLPYDK (221 aa)) is the Histidine kinase domain. The residue at position 218 (His-218) is a Phosphohistidine.

In terms of assembly, may form homodimers. May interact with serine/threonine-protein kinase StkP; the interaction may play a role in regulating Walk signal transduction. Autophosphorylated.

It is found in the membrane. The enzyme catalyses ATP + protein L-histidine = ADP + protein N-phospho-L-histidine.. Its function is as follows. Member of the two-component regulatory system WalK/WalR that regulates genes involved in cell wall metabolism. Functions as a sensor protein kinase which is autophosphorylated at a histidine residue and transfers its phosphate group to WalR. In turn, WalR binds to the upstream promoter regions of target genes to positively and negatively regulate their expression. Required to maintain expression of WalRK regulon genes in exponentially growing cells, including peptidoglycan hydrolase pcsB. Phosphorylates WalR and also capable of dephosphorylation of WalR. WalK phosphatase activity is probably involved in preventing cross-talk from PnpS and other non-cognate sensor kinases during exponential growth. May be considered a potential virulence factor. The sequence is that of Sensor histidine protein kinase/phosphatase WalK from Streptococcus pneumoniae serotype 2 (strain D39 / NCTC 7466).